The chain runs to 215 residues: Cytochrome b6 (215 aa).

Residues 32 to 52 (LFYCLGGITLTCFLIQVATGF) traverse the membrane as a helical segment. Position 35 (Cys35) interacts with heme c. Heme b-binding residues include His86 and His100. 3 consecutive transmembrane segments (helical) span residues 90–110 (ASMMVLMMVLHVFRVYLTGGF), 116–136 (STWVTGVIMASCTVSFGVTGY), and 186–206 (LHTFVLPLLTAVFMLGHFLMI). His187 and His202 together coordinate heme b.

Belongs to the cytochrome b family. PetB subfamily. The 4 large subunits of the cytochrome b6-f complex are cytochrome b6, subunit IV (17 kDa polypeptide, PetD), cytochrome f and the Rieske protein, while the 4 small subunits are PetG, PetL, PetM and PetN. The complex functions as a dimer. Heme b serves as cofactor. Heme c is required as a cofactor.

It is found in the plastid. The protein resides in the chloroplast thylakoid membrane. In terms of biological role, component of the cytochrome b6-f complex, which mediates electron transfer between photosystem II (PSII) and photosystem I (PSI), cyclic electron flow around PSI, and state transitions. The polypeptide is Cytochrome b6 (Bigelowiella natans (Pedinomonas minutissima)).